A 209-amino-acid chain; its full sequence is tRNA (guanine-N(7)-)-methyltransferase (209 aa).

Glu40, Glu65, and Asp114 together coordinate S-adenosyl-L-methionine. Asp114 is a catalytic residue. Residues Asp150 and 188–191 each bind substrate; that span reads TAFE.

This sequence belongs to the class I-like SAM-binding methyltransferase superfamily. TrmB family.

The enzyme catalyses guanosine(46) in tRNA + S-adenosyl-L-methionine = N(7)-methylguanosine(46) in tRNA + S-adenosyl-L-homocysteine. Its pathway is tRNA modification; N(7)-methylguanine-tRNA biosynthesis. Catalyzes the formation of N(7)-methylguanine at position 46 (m7G46) in tRNA. In Bdellovibrio bacteriovorus (strain ATCC 15356 / DSM 50701 / NCIMB 9529 / HD100), this protein is tRNA (guanine-N(7)-)-methyltransferase.